The sequence spans 188 residues: Protein SSX5 (188 aa).

The KRAB-related domain occupies 20–83 (KMQKAFDDIA…KRVADFQGND (64 aa)). Residues 78–188 (DFQGNDFDND…EISDPQEDDE (111 aa)) are disordered. Residues 112–122 (TPEKPAEEGND) show a composition bias toward basic and acidic residues. Over residues 144-155 (KLNTSEKVNKTS) the composition is skewed to polar residues. A compositionally biased stretch (basic residues) spans 156–170 (GPKRGKHAWTHRVRE). Residues 179-188 (EISDPQEDDE) show a composition bias toward acidic residues.

It belongs to the SSX family.

Functionally, could act as a modulator of transcription. The chain is Protein SSX5 (SSX5) from Homo sapiens (Human).